A 406-amino-acid chain; its full sequence is Probable endo-xylogalacturonan hydrolase A (406 aa).

The signal sequence occupies residues 1-18 (MLYYRNLALLSLLSLSSA). PbH1 repeat units follow at residues 183-213 (AKDV…DIGS), 214-235 (STHV…ALKP), 237-257 (CNYV…SVGS), and 299-320 (VKNV…QIQS). D228 serves as the catalytic Proton donor. The N-linked (GlcNAc...) asparagine glycan is linked to N244. The active site involves H251. N301 carries an N-linked (GlcNAc...) asparagine glycan.

It belongs to the glycosyl hydrolase 28 family.

The protein localises to the secreted. Functionally, pectinolytic enzyme involved in the degradation of xylogalacturonan (xga), a galacturonan backbone heavily substituted with xylose, and which is one important component of the hairy regions of pectin. Activity requires a galacturonic acid backbone substituted with xylose. The polypeptide is Probable endo-xylogalacturonan hydrolase A (xghA) (Neosartorya fischeri (strain ATCC 1020 / DSM 3700 / CBS 544.65 / FGSC A1164 / JCM 1740 / NRRL 181 / WB 181) (Aspergillus fischerianus)).